The primary structure comprises 109 residues: Fluoride-specific ion channel FluC 1 (109 aa).

4 helical membrane passes run 1–21 (MVIV…YFFS), 29–49 (LPLG…VFYN), 55–75 (EVYA…STLN), and 87–107 (VFYS…FLGI). Na(+) is bound by residues Gly-66 and Thr-69.

Belongs to the fluoride channel Fluc/FEX (TC 1.A.43) family.

It localises to the cell membrane. It catalyses the reaction fluoride(in) = fluoride(out). With respect to regulation, na(+) is not transported, but it plays an essential structural role and its presence is essential for fluoride channel function. Its function is as follows. Fluoride-specific ion channel. Important for reducing fluoride concentration in the cell, thus reducing its toxicity. This Streptococcus pneumoniae (strain ATCC BAA-255 / R6) protein is Fluoride-specific ion channel FluC 1.